The following is a 117-amino-acid chain: Minor capsid protein VP2 (117 aa).

Belongs to the lagovirus VP2 protein family. Homooligomer. The portal-like structure consists in 12 copies of VP2. Interacts with capsid protein VP1.

The protein localises to the virion. The protein resides in the host cytoplasm. Minor structural protein that forms a portal-like structure at a unique three-fold axis of symmetry, following binding to the host receptor. The channel formed by VP2 may allow the delivery of the viral genome through the host endosomal membrane. The protein is Minor capsid protein VP2 of Rabbit hemorrhagic disease virus (strain AST89) (Ra/LV/RHDV/AST89/1989/SP).